We begin with the raw amino-acid sequence, 186 residues long: Large ribosomal subunit protein uL15 (186 aa).

The tract at residues 1 to 48 (MDLSSLRPAKGAVKARKRVGRGPGSGNGTTAGKGNKGQQSRSGYQRPV) is disordered. Residues 21 to 35 (RGPGSGNGTTAGKGN) show a composition bias toward gly residues.

This sequence belongs to the universal ribosomal protein uL15 family. As to quaternary structure, part of the 50S ribosomal subunit.

Its function is as follows. Binds to the 23S rRNA. This is Large ribosomal subunit protein uL15 from Chlorobaculum tepidum (strain ATCC 49652 / DSM 12025 / NBRC 103806 / TLS) (Chlorobium tepidum).